Consider the following 1385-residue polypeptide: Probable serine/threonine-protein kinase DDB_G0268876 (1385 aa).

Residues Leu758–Leu1008 enclose the Protein kinase domain. Residues Ile764 to Val772 and Lys785 contribute to the ATP site. Residue Asp878 is the Proton acceptor of the active site. 3 disordered regions span residues Gly1040–Ile1074, Glu1091–Gly1266, and Ile1287–Asn1339. Residues Val1055–Lys1073 show a composition bias toward polar residues. Residues Ser1107–Arg1144 are compositionally biased toward low complexity. Over residues Pro1145–Pro1162 the composition is skewed to basic and acidic residues. 3 stretches are compositionally biased toward low complexity: residues Asn1189 to Ile1232, Phe1242 to Gly1266, and Asn1295 to Asn1339.

It belongs to the protein kinase superfamily. TKL Ser/Thr protein kinase family.

It carries out the reaction L-seryl-[protein] + ATP = O-phospho-L-seryl-[protein] + ADP + H(+). The catalysed reaction is L-threonyl-[protein] + ATP = O-phospho-L-threonyl-[protein] + ADP + H(+). The sequence is that of Probable serine/threonine-protein kinase DDB_G0268876 from Dictyostelium discoideum (Social amoeba).